A 565-amino-acid polypeptide reads, in one-letter code: Mitochondrial distribution and morphology protein 34 (565 aa).

Residues 1-208 (MAFNFNWSPL…VPEYRDRESE (208 aa)) form the SMP-LTD domain. Residues 209–220 (SVNTLDLSSESG) show a composition bias toward polar residues. Disordered regions lie at residues 209 to 241 (SVNT…GNAL), 347 to 463 (FGSY…SRSA), and 533 to 565 (MQEQ…AYGH). A compositionally biased stretch (basic residues) spans 353–367 (PGRHSRSHTKKRKKR). Residues 368–378 (VVDLRRPKTTD) show a composition bias toward basic and acidic residues. Positions 382–391 (SVSGDSVFSS) are enriched in low complexity. Polar residues-rich tracts occupy residues 392–402 (ENATSAPTIFS) and 439–463 (QGDQ…SRSA).

It belongs to the MDM34 family. In terms of assembly, component of the ER-mitochondria encounter structure (ERMES) or MDM complex, composed of mmm1, mdm10, mdm12 and mdm34.

The protein localises to the mitochondrion outer membrane. In terms of biological role, component of the ERMES/MDM complex, which serves as a molecular tether to connect the endoplasmic reticulum (ER) and mitochondria. Components of this complex are involved in the control of mitochondrial shape and protein biogenesis, and function in nonvesicular lipid trafficking between the ER and mitochondria. Mdm34 is required for the interaction of the ER-resident membrane protein mmm1 and the outer mitochondrial membrane-resident beta-barrel protein mdm10. The protein is Mitochondrial distribution and morphology protein 34 of Talaromyces marneffei (strain ATCC 18224 / CBS 334.59 / QM 7333) (Penicillium marneffei).